The sequence spans 233 residues: Large ribosomal subunit protein uL1 (233 aa).

It belongs to the universal ribosomal protein uL1 family. In terms of assembly, part of the 50S ribosomal subunit.

Binds directly to 23S rRNA. The L1 stalk is quite mobile in the ribosome, and is involved in E site tRNA release. Functionally, protein L1 is also a translational repressor protein, it controls the translation of the L11 operon by binding to its mRNA. The protein is Large ribosomal subunit protein uL1 of Shewanella sediminis (strain HAW-EB3).